We begin with the raw amino-acid sequence, 321 residues long: Phospho-N-acetylmuramoyl-pentapeptide-transferase (321 aa).

10 helical membrane-spanning segments follow: residues 1–21 (MIFV…PVLI), 50–70 (MGGL…IIFV), 76–96 (IILL…DDYI), 112–132 (FLAQ…FHLV), 140–160 (IPFT…IVFW), 176–196 (GLAT…SFVL), 200–220 (AIGI…PYNI), 225–245 (VFMG…ISIM), 250–270 (LSLI…MLQV), and 300–320 (VVTV…WIGV).

It belongs to the glycosyltransferase 4 family. MraY subfamily. Mg(2+) serves as cofactor.

The protein resides in the cell membrane. It carries out the reaction UDP-N-acetyl-alpha-D-muramoyl-L-alanyl-gamma-D-glutamyl-L-lysyl-D-alanyl-D-alanine + di-trans,octa-cis-undecaprenyl phosphate = Mur2Ac(oyl-L-Ala-gamma-D-Glu-L-Lys-D-Ala-D-Ala)-di-trans,octa-cis-undecaprenyl diphosphate + UMP. Its pathway is cell wall biogenesis; peptidoglycan biosynthesis. Functionally, catalyzes the initial step of the lipid cycle reactions in the biosynthesis of the cell wall peptidoglycan: transfers peptidoglycan precursor phospho-MurNAc-pentapeptide from UDP-MurNAc-pentapeptide onto the lipid carrier undecaprenyl phosphate, yielding undecaprenyl-pyrophosphoryl-MurNAc-pentapeptide, known as lipid I. In Staphylococcus aureus (strain Mu50 / ATCC 700699), this protein is Phospho-N-acetylmuramoyl-pentapeptide-transferase.